We begin with the raw amino-acid sequence, 413 residues long: 5'-deoxyadenosine deaminase (413 aa).

2 residues coordinate Zn(2+): His57 and His59. 2 residues coordinate substrate: Glu86 and His171. His198 lines the Zn(2+) pocket. Substrate-binding residues include Glu201 and Asp286. Asp286 contributes to the Zn(2+) binding site.

It belongs to the metallo-dependent hydrolases superfamily. MTA/SAH deaminase family. As to quaternary structure, homotetramer. Zn(2+) is required as a cofactor.

It catalyses the reaction 5'-deoxyadenosine + H2O + H(+) = 5'-deoxyinosine + NH4(+). The enzyme catalyses S-adenosyl-L-homocysteine + H2O + H(+) = S-inosyl-L-homocysteine + NH4(+). It carries out the reaction S-methyl-5'-thioadenosine + H2O + H(+) = S-methyl-5'-thioinosine + NH4(+). The catalysed reaction is adenosine + H2O + H(+) = inosine + NH4(+). Its pathway is amino-acid biosynthesis; S-adenosyl-L-methionine biosynthesis. Its function is as follows. Catalyzes the deamination of three SAM-derived enzymatic products, namely 5'-deoxyadenosine, S-adenosyl-L-homocysteine, and 5'-methylthioadenosine, to produce the inosine analogs. Can also deaminate adenosine. The preferred substrate for this enzyme is 5'-deoxyadenosine, but all these substrates are efficiently deaminated. Likely functions in a S-adenosyl-L-methionine (SAM) recycling pathway from S-adenosyl-L-homocysteine (SAH) produced from SAM-dependent methylation reactions. May also be involved in the recycling of 5'-deoxyadenosine, whereupon the 5'-deoxyribose moiety of 5'-deoxyinosine is further metabolized to deoxyhexoses used for the biosynthesis of aromatic amino acids in methanogens. This chain is 5'-deoxyadenosine deaminase, found in Methanothrix thermoacetophila (strain DSM 6194 / JCM 14653 / NBRC 101360 / PT) (Methanosaeta thermophila).